The chain runs to 314 residues: 2,3-dihydroxyphenylpropionate/2,3-dihydroxicinnamic acid 1,2-dioxygenase (314 aa).

The active-site Proton donor is the His115. The active-site Proton acceptor is His179.

Belongs to the LigB/MhpB extradiol dioxygenase family. As to quaternary structure, homotetramer. The cofactor is Fe(2+).

The enzyme catalyses 3-(2,3-dihydroxyphenyl)propanoate + O2 = (2Z,4E)-2-hydroxy-6-oxonona-2,4-dienedioate + H(+). It carries out the reaction (2E)-3-(2,3-dihydroxyphenyl)prop-2-enoate + O2 = (2Z,4E,7E)-2-hydroxy-6-oxonona-2,4,7-trienedioate + H(+). It functions in the pathway aromatic compound metabolism; 3-phenylpropanoate degradation. In terms of biological role, catalyzes the non-heme iron(II)-dependent oxidative cleavage of 2,3-dihydroxyphenylpropionic acid and 2,3-dihydroxicinnamic acid into 2-hydroxy-6-ketononadienedioate and 2-hydroxy-6-ketononatrienedioate, respectively. The protein is 2,3-dihydroxyphenylpropionate/2,3-dihydroxicinnamic acid 1,2-dioxygenase of Klebsiella pneumoniae (strain 342).